A 146-amino-acid polypeptide reads, in one-letter code: Acidic phospholipase A2 CM-II (146 aa).

An N-terminal signal peptide occupies residues 1–21; sequence MNPAHLLILAAVCVSPLGAFS. A propeptide spanning residues 22 to 27 is cleaved from the precursor; sequence NRPMPL. 7 disulfides stabilise this stretch: Cys-38–Cys-98, Cys-53–Cys-145, Cys-55–Cys-71, Cys-70–Cys-126, Cys-77–Cys-119, Cys-87–Cys-112, and Cys-105–Cys-117. Residues Tyr-54, Gly-56, and Gly-58 each coordinate Ca(2+). The active site involves His-74. Ca(2+) is bound at residue Asp-75. Asp-120 is a catalytic residue.

The protein belongs to the phospholipase A2 family. Group I subfamily. D49 sub-subfamily. It depends on Ca(2+) as a cofactor. As to expression, expressed by the venom gland.

The protein resides in the secreted. It catalyses the reaction a 1,2-diacyl-sn-glycero-3-phosphocholine + H2O = a 1-acyl-sn-glycero-3-phosphocholine + a fatty acid + H(+). Its function is as follows. PLA2 catalyzes the calcium-dependent hydrolysis of the 2-acyl groups in 3-sn-phosphoglycerides. Is able to suppress the acetylcholine (ACh)-evoked current mediated by alpha-7 (CHRNA7)-similar nAChRs in L.stagnalis neurons (IC(50)=37 nM) and to compete with alpha-bungarotoxin for binding to muscle- and alpha-7 neuronal nAChR types, as well as to AChBPs. In inhibition of alpha-bungarotoxin binding, this toxin is similarly active against T.californica nAChR (IC(50)=1.2 uM), human alpha-7 nAChR (IC(50)=3.2 uM), and L.stagnalis AChBP (IC(50)=1.0 uM), whereas it is not active against A.californica AChBP (IC(50)&gt;100 uM). This chain is Acidic phospholipase A2 CM-II, found in Naja kaouthia (Monocled cobra).